The chain runs to 343 residues: S-adenosylmethionine:tRNA ribosyltransferase-isomerase (343 aa).

The protein belongs to the QueA family. In terms of assembly, monomer.

The protein resides in the cytoplasm. It catalyses the reaction 7-aminomethyl-7-carbaguanosine(34) in tRNA + S-adenosyl-L-methionine = epoxyqueuosine(34) in tRNA + adenine + L-methionine + 2 H(+). It participates in tRNA modification; tRNA-queuosine biosynthesis. In terms of biological role, transfers and isomerizes the ribose moiety from AdoMet to the 7-aminomethyl group of 7-deazaguanine (preQ1-tRNA) to give epoxyqueuosine (oQ-tRNA). This Coxiella burnetii (strain Dugway 5J108-111) protein is S-adenosylmethionine:tRNA ribosyltransferase-isomerase.